The primary structure comprises 125 residues: Histone H2B (125 aa).

Residues 1-32 (MAPKVRAAKKGEKRVGKAKSGTAETAKRRRGK) are disordered. The O-linked (GlcNAc) serine glycan is linked to Ser-112. A Glycyl lysine isopeptide (Lys-Gly) (interchain with G-Cter in ubiquitin) cross-link involves residue Lys-120.

This sequence belongs to the histone H2B family. In terms of assembly, the nucleosome is a histone octamer containing two molecules each of H2A, H2B, H3 and H4 assembled in one H3-H4 heterotetramer and two H2A-H2B heterodimers. The octamer wraps approximately 147 bp of DNA. Post-translationally, monoubiquitination of Lys-120 gives a specific tag for epigenetic transcriptional activation and is also prerequisite for histone H3 'Lys-4' and 'Lys-79' methylation. GlcNAcylation at Ser-112 promotes monoubiquitination of Lys-120. It fluctuates in response to extracellular glucose, and associates with transcribed genes.

Its subcellular location is the nucleus. It is found in the chromosome. Its function is as follows. Core component of nucleosome. Nucleosomes wrap and compact DNA into chromatin, limiting DNA accessibility to the cellular machineries which require DNA as a template. Histones thereby play a central role in transcription regulation, DNA repair, DNA replication and chromosomal stability. DNA accessibility is regulated via a complex set of post-translational modifications of histones, also called histone code, and nucleosome remodeling. This is Histone H2B from Acropora formosa (Staghorn coral).